Consider the following 374-residue polypeptide: DNA replication and repair protein RecF (374 aa).

ATP is bound at residue Gly30–Thr37.

It belongs to the RecF family.

It is found in the cytoplasm. The RecF protein is involved in DNA metabolism; it is required for DNA replication and normal SOS inducibility. RecF binds preferentially to single-stranded, linear DNA. It also seems to bind ATP. This is DNA replication and repair protein RecF from Lactobacillus gasseri (strain ATCC 33323 / DSM 20243 / BCRC 14619 / CIP 102991 / JCM 1131 / KCTC 3163 / NCIMB 11718 / NCTC 13722 / AM63).